Reading from the N-terminus, the 242-residue chain is Probable porphobilinogen deaminase (242 aa).

This sequence belongs to the HMBS family.

It carries out the reaction 4 porphobilinogen + H2O = hydroxymethylbilane + 4 NH4(+). It functions in the pathway porphyrin-containing compound metabolism; protoporphyrin-IX biosynthesis; coproporphyrinogen-III from 5-aminolevulinate: step 2/4. In terms of biological role, tetrapolymerization of the monopyrrole PBG into the hydroxymethylbilane pre-uroporphyrinogen in several discrete steps. In Chlamydia muridarum (strain MoPn / Nigg), this protein is Probable porphobilinogen deaminase (hemC).